The sequence spans 54 residues: Defensin-like protein 1 (54 aa).

4 disulfides stabilise this stretch: Cys6/Cys54, Cys17/Cys39, Cys23/Cys48, and Cys27/Cys50.

The protein belongs to the DEFL family.

The protein localises to the secreted. In terms of biological role, possesses antifungal activity insensitive to inorganic cations. Causes germ tubes and hyphae to swell and form multiple hyphal buds. Binds to the plasma membrane of the fungus. Has no inhibitory effect on insect gut alpha-amylase. This chain is Defensin-like protein 1, found in Heuchera sanguinea (Coralbells).